We begin with the raw amino-acid sequence, 314 residues long: DNA topoisomerase I (314 aa).

Residues isoleucine 77–glycine 314 enclose the Topo IB-type catalytic domain. Tyrosine 274 (O-(3'-phospho-DNA)-tyrosine intermediate) is an active-site residue.

This sequence belongs to the type IB topoisomerase family.

The protein resides in the virion. The catalysed reaction is ATP-independent breakage of single-stranded DNA, followed by passage and rejoining.. In terms of biological role, releases the supercoiling and torsional tension of DNA introduced during the DNA replication and transcription by transiently cleaving and rejoining one strand of the DNA duplex. Introduces a single-strand break via transesterification at the specific target site 5'-[CT]CCTTp site in duplex DNA. The scissile phosphodiester is attacked by the catalytic tyrosine of the enzyme, resulting in the formation of a DNA-(3'-phosphotyrosyl)-enzyme intermediate and the expulsion of a 5'-OH DNA strand. The free DNA strand then undergoes passage around the unbroken strand thus removing DNA supercoils. Finally, in the religation step, the DNA 5'-OH attacks the covalent intermediate to expel the active-site tyrosine and restore the DNA phosphodiester backbone. The sequence is that of DNA topoisomerase I (OPG111) from Cynomys gunnisoni (Gunnison's prairie dog).